Consider the following 500-residue polypeptide: Protein SLENDER RICE1-LIKE 2 (500 aa).

Residues 68–454 (KELEKMALRS…QRLYSASAWR (387 aa)) enclose the GRAS domain. Positions 75–135 (LRSVNLMVTC…DALAERLFPA (61 aa)) are leucine repeat I (LRI). Residues 154 to 219 (FRGFYEAGPY…GGPPFLRITG (66 aa)) form a VHIID region. The VHIID signature appears at 185-189 (VHVID). The leucine repeat II (LRII) stretch occupies residues 233-265 (DVGLRLAEFARSCSVPFAFRGIAADQLDGLRPW). The tract at residues 275 to 376 (VAINSVLQLH…EAYLQGEIAD (102 aa)) is PFYRE. Positions 283–287 (LHRLL) match the LXXLL motif motif. The tract at residues 379–454 (SREGSSRVER…QRLYSASAWR (76 aa)) is SAW. Positions 466 to 500 (SGAADAMEESQNSNTNGGGGGSSGGGHGALNQIMQ) are disordered. The span at 481-493 (NGGGGGSSGGGHG) shows a compositional bias: gly residues.

Belongs to the GRAS family. As to expression, expressed at low levels in leaf blades, leaf sheaths, rachis and flowers. Expressed in the embryo of immature seeds.

Its subcellular location is the nucleus. Functionally, probable transcriptional regulator that acts as a repressor of the gibberellin (GA) signaling pathway. Its repressive activity is weaker than that of SLR1. Its overexpression prevents the GA signaling pathway and induces a dwarf phenotype in Arabidopsis thaliana plants. The sequence is that of Protein SLENDER RICE1-LIKE 2 from Oryza sativa subsp. japonica (Rice).